The following is a 307-amino-acid chain: Ribosomal protein L11 methyltransferase (307 aa).

S-adenosyl-L-methionine is bound by residues Thr154, Gly178, Asp200, and Asn242.

Belongs to the methyltransferase superfamily. PrmA family.

It is found in the cytoplasm. The enzyme catalyses L-lysyl-[protein] + 3 S-adenosyl-L-methionine = N(6),N(6),N(6)-trimethyl-L-lysyl-[protein] + 3 S-adenosyl-L-homocysteine + 3 H(+). In terms of biological role, methylates ribosomal protein L11. The sequence is that of Ribosomal protein L11 methyltransferase from Syntrophotalea carbinolica (strain DSM 2380 / NBRC 103641 / GraBd1) (Pelobacter carbinolicus).